Here is a 693-residue protein sequence, read N- to C-terminus: MKIFREVFELGNKEIILETGGMARQADGSVTVSCGNNVVLVTTVVKKSVADGTDFFPLSVHYLEKTYAAGKIPGGFLRREGRPSEEQILISRLIDRSIRPSFPDGFFNEIQIVATVLSYDGAVAPDILALIGASASLAISGAPYDDVVAGVRVGYTNGKYILNPNKQDLRDSDLDLVVSGTDDAILMVESEANSLPESVMLGGILYAHKHLKTIINSINRLAKVASKPRIEYSIYQINKFLKSQIKSQFFGEIKNAYTIASKQERNLKLNAIRKNVLEYIFSSDVDGNEYTEKEILEAFHDIEKDLVRSNILEGKPRIDGRCTETIRPINVKIGVLPGVHGSALFTRGETQALVVTTLGSDRDAQLVESLDGIEKCRYMLHYNFPPYSVGECGMVGMAPKRREIGHANLAKRATQAVFPNEEAYPYVVRVVSEILESNGSSSMATVCGSSLSMMDAGVPIAEPVAGIAMGLIKDGAKYAVLSDILGDEDHLGDMDFKVAGTRYGVTALQMDIKIKGISREILEQALEQARVGRLHILGIMNEVIKEHKEAVSDVAPQIHVMNINPAKIKDVVGRGGATVKGIVEKTGAQIDTSDSGEVKVFAKDKKSMDMAVAMIEEIVAEVEEGQVYKGKIVKLLDSGVFVNLLGSQDGYLPFSEIEQAGMKTNSLVEGQGLEVLVQNIDRGGRVKLSLVAR.

Aspartate 489 and aspartate 495 together coordinate Mg(2+). In terms of domain architecture, KH spans 556–615 (PQIHVMNINPAKIKDVVGRGGATVKGIVEKTGAQIDTSDSGEVKVFAKDKKSMDMAVAMI). The S1 motif domain maps to 625-693 (GQVYKGKIVK…GRVKLSLVAR (69 aa)).

Belongs to the polyribonucleotide nucleotidyltransferase family. As to quaternary structure, component of the RNA degradosome, which is a multiprotein complex involved in RNA processing and mRNA degradation. Requires Mg(2+) as cofactor.

It is found in the cytoplasm. The catalysed reaction is RNA(n+1) + phosphate = RNA(n) + a ribonucleoside 5'-diphosphate. Functionally, involved in mRNA degradation. Catalyzes the phosphorolysis of single-stranded polyribonucleotides processively in the 3'- to 5'-direction. This chain is Polyribonucleotide nucleotidyltransferase, found in Francisella tularensis subsp. tularensis (strain WY96-3418).